The sequence spans 493 residues: Tripartite motif-containing protein 5 (493 aa).

N-acetylalanine is present on A2. The segment at 15–59 (CPICLELLTQPLSLDCGHSFCQACLTANHKKSTLDKGERSCPVCR) adopts an RING-type zinc-finger fold. At S86 the chain carries Phosphoserine. The segment at 90-132 (QKVDHCARHGEKLLLFCKEDGKVICWLCERSQEHRGHHTFLTE) adopts a B box-type zinc-finger fold. 4 residues coordinate Zn(2+): C95, H98, C117, and H123. Positions 131–223 (TEEVAQKYQV…LTKSETEMVQ (93 aa)) form a coiled coil. The segment at 185–198 (FEQLRDILDWEESN) is required for interaction with GABARAP and for autophagy. Residues 281–493 (LKGMLEVFRE…VPMTLCSPSS (213 aa)) form the B30.2/SPRY domain.

It belongs to the TRIM/RBCC family. As to quaternary structure, can form homodimers and homotrimers. In addition to lower-order dimerization, also exhibits a higher-order multimerization and both low- and high-order multimerizations are essential for its restriction activity. Interacts with BTBD1 and BTBD2. Interacts with PSMC4, PSMC5, PSMD7 and HSPA8/HSC70. Interacts (via B30.2/SPRY domain) with HSPA1A/B. Interacts with PSMC2, MAP3K7/TAK1, TAB2 and TAB3. Interacts with SQSTM1. Interacts with TRIM6 and TRIM34. Interacts with ULK1 (phosphorylated form), GABARAP, GABARAPL1, GABARAPL2, MAP1LC3A, MAP1LC3C and BECN1. In terms of processing, degraded in a proteasome-independent fashion in the absence of viral infection but in a proteasome-dependent fashion following exposure to restriction sensitive virus. Post-translationally, autoubiquitinated in a RING finger- and UBE2D2-dependent manner. Monoubiquitinated by TRIM21. Deubiquitinated by Yersinia YopJ. Ubiquitination may not lead to proteasomal degradation.

The protein localises to the cytoplasm. It localises to the nucleus. It catalyses the reaction S-ubiquitinyl-[E2 ubiquitin-conjugating enzyme]-L-cysteine + [acceptor protein]-L-lysine = [E2 ubiquitin-conjugating enzyme]-L-cysteine + N(6)-ubiquitinyl-[acceptor protein]-L-lysine.. It functions in the pathway protein modification; protein ubiquitination. In terms of biological role, capsid-specific restriction factor that prevents infection from non-host-adapted retroviruses. Blocks viral replication early in the life cycle, after viral entry but before reverse transcription. In addition to acting as a capsid-specific restriction factor, also acts as a pattern recognition receptor that activates innate immune signaling in response to the retroviral capsid lattice. Binding to the viral capsid triggers its E3 ubiquitin ligase activity, and in concert with the heterodimeric ubiquitin conjugating enzyme complex UBE2V1-UBE2N (also known as UBC13-UEV1A complex) generates 'Lys-63'-linked polyubiquitin chains, which in turn are catalysts in the autophosphorylation of the MAP3K7/TAK1 complex (includes TAK1, TAB2, and TAB3). Activation of the MAP3K7/TAK1 complex by autophosphorylation results in the induction and expression of NF-kappa-B and MAPK-responsive inflammatory genes, thereby leading to an innate immune response in the infected cell. Plays a role in regulating autophagy through activation of autophagy regulator BECN1 by causing its dissociation from its inhibitors BCL2 and TAB2. In Pongo pygmaeus (Bornean orangutan), this protein is Tripartite motif-containing protein 5 (TRIM5).